Reading from the N-terminus, the 689-residue chain is Glycine--tRNA ligase beta subunit (689 aa).

Belongs to the class-II aminoacyl-tRNA synthetase family. Tetramer of two alpha and two beta subunits.

The protein localises to the cytoplasm. It catalyses the reaction tRNA(Gly) + glycine + ATP = glycyl-tRNA(Gly) + AMP + diphosphate. The protein is Glycine--tRNA ligase beta subunit of Dichelobacter nodosus (strain VCS1703A).